The chain runs to 533 residues: Calcium/calmodulin-dependent protein kinase type II subunit delta (533 aa).

At A2 the chain carries N-acetylalanine. One can recognise a Protein kinase domain in the interval 14–272 (YQLFEELGKG…ASEALKHPWI (259 aa)). ATP is bound by residues 20–28 (LGKGAFSVV) and K43. D136 acts as the Proton acceptor in catalysis. The tract at residues 283 to 292 (HRQETVDCLK) is autoinhibitory domain. Position 287 is a phosphothreonine; by autocatalysis (T287). Residues 291-301 (LKKFNARRKLK) are calmodulin-binding. Phosphothreonine; by autocatalysis is present on residues T306 and T307. A Phosphoserine modification is found at S315. At K318 the chain carries N6-acetyllysine. 2 positions are modified to phosphoserine: S319 and S364. The tract at residues 337–375 (TSPKENIPTPALEPQTTVIHNPDGNKESTESSNTTIEDE) is disordered. Residue T365 is modified to Phosphothreonine. S367 is subject to Phosphoserine. A phosphothreonine mark is found at T370 and T371. Phosphoserine occurs at positions 438, 524, and 528.

Belongs to the protein kinase superfamily. CAMK Ser/Thr protein kinase family. CaMK subfamily. CAMK2 is composed of 4 different chains: alpha (CAMK2A), beta (CAMK2B), gamma (CAMK2G), and delta (CAMK2D). The different isoforms assemble into homo- or heteromultimeric holoenzymes composed of 12 subunits with two hexameric rings stacked one on top of the other. Interacts with RRAD and CACNB2. Post-translationally, autophosphorylation of Thr-287 following activation by Ca(2+)/calmodulin. Phosphorylation of Thr-287 locks the kinase into an activated state. In terms of tissue distribution, expressed in liver.

The protein resides in the cell membrane. Its subcellular location is the sarcolemma. It is found in the sarcoplasmic reticulum membrane. The enzyme catalyses L-seryl-[protein] + ATP = O-phospho-L-seryl-[protein] + ADP + H(+). It catalyses the reaction L-threonyl-[protein] + ATP = O-phospho-L-threonyl-[protein] + ADP + H(+). With respect to regulation, activated by Ca(2+)/calmodulin. Binding of calmodulin results in conformational change that relieves intrasteric autoinhibition and allows autophosphorylation of Thr-287 which turns the kinase in a constitutively active form and confers to the kinase a Ca(2+)-independent activity. Its function is as follows. Calcium/calmodulin-dependent protein kinase involved in the regulation of Ca(2+) homeostatis and excitation-contraction coupling (ECC) in heart by targeting ion channels, transporters and accessory proteins involved in Ca(2+) influx into the myocyte, Ca(2+) release from the sarcoplasmic reticulum (SR), SR Ca(2+) uptake and Na(+) and K(+) channel transport. Targets also transcription factors and signaling molecules to regulate heart function. In its activated form, is involved in the pathogenesis of dilated cardiomyopathy and heart failure. Contributes to cardiac decompensation and heart failure by regulating SR Ca(2+) release via direct phosphorylation of RYR2 Ca(2+) channel on 'Ser-2808'. In the nucleus, phosphorylates the MEF2 repressor HDAC4, promoting its nuclear export and binding to 14-3-3 protein, and expression of MEF2 and genes involved in the hypertrophic program. Is essential for left ventricular remodeling responses to myocardial infarction. In pathological myocardial remodeling acts downstream of the beta adrenergic receptor signaling cascade to regulate key proteins involved in ECC. Regulates Ca(2+) influx to myocytes by binding and phosphorylating the L-type Ca(2+) channel subunit beta-2 CACNB2. In addition to Ca(2+) channels, can target and regulate the cardiac sarcolemmal Na(+) channel Nav1.5/SCN5A and the K+ channel Kv4.3/KCND3, which contribute to arrhythmogenesis in heart failure. Phosphorylates phospholamban (PLN/PLB), an endogenous inhibitor of SERCA2A/ATP2A2, contributing to the enhancement of SR Ca(2+) uptake that may be important in frequency-dependent acceleration of relaxation (FDAR) and maintenance of contractile function during acidosis. May participate in the modulation of skeletal muscle function in response to exercise, by regulating SR Ca(2+) transport through phosphorylation of PLN/PLB and triadin, a ryanodine receptor-coupling factor. In response to interferon-gamma (IFN-gamma) stimulation, catalyzes phosphorylation of STAT1, stimulating the JAK-STAT signaling pathway. The polypeptide is Calcium/calmodulin-dependent protein kinase type II subunit delta (CAMK2D) (Oryctolagus cuniculus (Rabbit)).